The following is a 456-amino-acid chain: Putative F-box/FBD/LRR-repeat protein At1g66300 (456 aa).

The interval 1–23 (MDEDGEKRVRTKRLCSPESSDKK) is disordered. Residues 28 to 74 (VDWVRDLPESLICHVLLNLSTKDVIKNCVLSTKWRYLWRYVPGLDLD) enclose the F-box domain. LRR repeat units lie at residues 136 to 163 (HLDL…KLCG), 185 to 210 (VKFA…TLCR), 234 to 260 (PNTM…TLSH), and 347 to 372 (FYED…VVGS). Residues 377-429 (MERTSIISGHRCLLSSLEYVEIETPLTGEVFEMKLVSYLLENSPILKKLTIHL) enclose the FBD domain.

In Arabidopsis thaliana (Mouse-ear cress), this protein is Putative F-box/FBD/LRR-repeat protein At1g66300.